A 305-amino-acid polypeptide reads, in one-letter code: Ribonuclease H (305 aa).

It carries out the reaction Endonucleolytic cleavage to 5'-phosphomonoester.. Its function is as follows. Plays essential roles in DNA replication by removing the RNA primers from lagging strand fragments. Exhibits 5'to 3' exonuclease activity on either RNA/DNA or DNA/DNA duplexes and endonuclease activity on either flap or fork DNA structures. This is Ribonuclease H (rnh) from Enterobacteria phage T4 (Bacteriophage T4).